The chain runs to 544 residues: Coiled-coil domain-containing protein 82 (544 aa).

A compositionally biased stretch (basic residues) spans 1–14 (MIHVRRHETRRNSK). A disordered region spans residues 1 to 294 (MIHVRRHETR…ESDEDGDDYI (294 aa)). Basic and acidic residues predominate over residues 16–27 (HVPEQKSRVDWR). Acidic residues predominate over residues 39–67 (DSDEELDSEEFDSDEELDSDESFENDEEL). 5 positions are modified to phosphoserine: Ser88, Ser131, Ser154, Ser195, and Ser219. Polar residues predominate over residues 88-108 (SKIQSEGNDSKCLINSGNGST). The span at 112–132 (ETNKIKHRNIDLQDQEKHLSQ) shows a compositional bias: basic and acidic residues. Residues 223 to 248 (MEQKTPEKTLAAQKREKLQKLKELSK) are compositionally biased toward basic and acidic residues. Residue Thr227 is modified to Phosphothreonine. The stretch at 229 to 256 (EKTLAAQKREKLQKLKELSKQRSRQRRS) forms a coiled coil. The segment covering 273–294 (DEVDEEEEEDNYESDEDGDDYI) has biased composition (acidic residues). Residue Ser329 is modified to Phosphoserine.

This is Coiled-coil domain-containing protein 82 (CCDC82) from Homo sapiens (Human).